Reading from the N-terminus, the 176-residue chain is Ribosome maturation factor RimM (176 aa).

Residues glutamate 93–isoleucine 166 enclose the PRC barrel domain.

Belongs to the RimM family. As to quaternary structure, binds ribosomal protein uS19.

The protein localises to the cytoplasm. An accessory protein needed during the final step in the assembly of 30S ribosomal subunit, possibly for assembly of the head region. Essential for efficient processing of 16S rRNA. May be needed both before and after RbfA during the maturation of 16S rRNA. It has affinity for free ribosomal 30S subunits but not for 70S ribosomes. This chain is Ribosome maturation factor RimM, found in Rhodopseudomonas palustris (strain BisA53).